The primary structure comprises 521 residues: MTATTPSDKDRVIIFDTTLRDGEQCPGATMTFEEKLEVASLLDAMGVDVIEAGFPIASDGDFAAVHEIAKRAKNAVICGLSRAGAKDIDRCAEAIRPAKQGRIHTFLSTSPVHMKYKLQMDAEQVYQLVISAVTRARNHTDNVEWSSEDGTRTEFDFLCKCVEAAIKAGATTINIPDTVGYSVPEEYFDLFKRVRENVPNSDKAIFSVHCHDDLGMAVANSLAGIRGGARQIECTVNGIGERAGNTALEEVVMAMRVRNDKLPFWNKIDTTMLTRASKVVSAATSFPVQYNKAIVGRNAFAHESGIHQDGMLKNAETYEIMRPESVGVKQTSLVMGKHSGRHAFVHKLEEMGYKLGQNQLEDAFVRFKALADRKKEIYDEDIEALVDQEIAQSHDRIKLLSLTVIAGTHGPQRATMKLDVEGQTRIEEAEGNGPVDAVFNCIKALVPHVAKLELYQVHAVTQGTDAQAEVSVRLAHEGRSMTARAADPDTLVASAKAYLSALNKIVMKRERDLPVPEAAAS.

In terms of domain architecture, Pyruvate carboxyltransferase spans 12–274 (VIIFDTTLRD…WNKIDTTMLT (263 aa)). 4 residues coordinate Mn(2+): Asp21, His209, His211, and Asn245. The tract at residues 398-521 (KLLSLTVIAG…DLPVPEAAAS (124 aa)) is regulatory domain.

This sequence belongs to the alpha-IPM synthase/homocitrate synthase family. LeuA type 1 subfamily. Homodimer. Mn(2+) serves as cofactor.

The protein localises to the cytoplasm. The catalysed reaction is 3-methyl-2-oxobutanoate + acetyl-CoA + H2O = (2S)-2-isopropylmalate + CoA + H(+). It functions in the pathway amino-acid biosynthesis; L-leucine biosynthesis; L-leucine from 3-methyl-2-oxobutanoate: step 1/4. Its function is as follows. Catalyzes the condensation of the acetyl group of acetyl-CoA with 3-methyl-2-oxobutanoate (2-ketoisovalerate) to form 3-carboxy-3-hydroxy-4-methylpentanoate (2-isopropylmalate). The protein is 2-isopropylmalate synthase of Rhodopseudomonas palustris (strain BisB18).